The sequence spans 321 residues: Protein ATP1B4 (321 aa).

The tract at residues 1 to 41 (MEPGMEMNTASEGGTRRGPENKHEEKVQDPNRGEAETKAEM) is disordered. Residues 1–72 (MEPGMEMNTA…RTCMGRTAKS (72 aa)) are Cytoplasmic-facing. The segment covering 14 to 41 (GTRRGPENKHEEKVQDPNRGEAETKAEM) has biased composition (basic and acidic residues). The chain crosses the membrane as a helical span at residues 73 to 93 (WGLILLFYFIFYTCLAGMFAF). Over 94–321 (CMYVMLLTLS…RIIFTLSIGK (228 aa)) the chain is Extracellular. N-linked (GlcNAc...) asparagine glycans are attached at residues Asn132, Asn176, and Asn193. Cys165 and Cys184 are joined by a disulfide. Disulfide bonds link Cys194-Cys210 and Cys233-Cys293. N-linked (GlcNAc...) asparagine glycans are attached at residues Asn239, Asn252, and Asn270.

The protein belongs to the X(+)/potassium ATPases subunit beta family. In terms of assembly, composed of two subunits: alpha (catalytic) and beta (accessory). Glycosylated. As to expression, expressed in skeletal muscle, intestine, heart, brain, retina, inner ear and skin.

The protein localises to the membrane. Its function is as follows. This is the non-catalytic component of the active enzyme, which catalyzes the hydrolysis of ATP coupled with the exchange of Na(+) and K(+) ions across the plasma membrane. The chain is Protein ATP1B4 (ATP1B4) from Gallus gallus (Chicken).